A 120-amino-acid chain; its full sequence is Large ribosomal subunit protein uL18 (120 aa).

It belongs to the universal ribosomal protein uL18 family. Part of the 50S ribosomal subunit; part of the 5S rRNA/L5/L18/L25 subcomplex. Contacts the 5S and 23S rRNAs.

In terms of biological role, this is one of the proteins that bind and probably mediate the attachment of the 5S RNA into the large ribosomal subunit, where it forms part of the central protuberance. The chain is Large ribosomal subunit protein uL18 from Methylobacterium sp. (strain 4-46).